The chain runs to 345 residues: Alpha-2-HS-glycoprotein (345 aa).

A signal peptide spans 1-18 (MKSLVLLLCFAQLWGCQS). A Cystatin fetuin-A-type 1 domain is found at 19 to 133 (APQGTGLGFR…QFRVMHTQCH (115 aa)). 6 disulfides stabilise this stretch: C32–C336, C89–C100, C114–C132, C146–C149, C208–C219, and C230–C247. N-linked (GlcNAc...) asparagine glycosylation occurs at N99. Phosphoserine is present on S134. A Phosphothreonine modification is found at T135. The residue at position 138 (S138) is a Phosphoserine. The 107-residue stretch at 144–250 (KLCPRCPLLT…EEVSVACKLF (107 aa)) folds into the Cystatin fetuin-A-type 2 domain. N-linked (GlcNAc...) asparagine glycosylation is found at N156 and N176. Phosphoserine is present on residues S305, S309, S312, and S314. The segment at 312–334 (SASGETLHSPKVGQPGAAGPVSP) is disordered.

The protein belongs to the fetuin family. In terms of processing, phosphorylated by FAM20C in the extracellular medium. In terms of tissue distribution, liver is the major site of synthesis, but fetuin is also expressed in limb buds and other extrahepatic tissues during development.

It is found in the secreted. In terms of biological role, probably involved in differentiation. Functionally, (Microbial infection) Facilitates invasion of hepatocytes by Plasmodium berghei sporozoites. The polypeptide is Alpha-2-HS-glycoprotein (Ahsg) (Mus musculus (Mouse)).